The following is a 252-amino-acid chain: Redox-sensing transcriptional repressor Rex (252 aa).

Positions leucine 26–leucine 65 form a DNA-binding region, H-T-H motif. Glycine 100–glycine 105 contacts NAD(+). Residues glutamate 222–alanine 252 are disordered.

The protein belongs to the transcriptional regulatory Rex family. As to quaternary structure, homodimer.

Its subcellular location is the cytoplasm. Modulates transcription in response to changes in cellular NADH/NAD(+) redox state. The polypeptide is Redox-sensing transcriptional repressor Rex (Streptomyces avermitilis (strain ATCC 31267 / DSM 46492 / JCM 5070 / NBRC 14893 / NCIMB 12804 / NRRL 8165 / MA-4680)).